The following is a 279-amino-acid chain: MTQVYDGFVHLGFSNRNGRTISHKKYQEGNSRVSADNSDANGVPYYFLINMGGGFVEGEQYQVTIDVNKDAHALVTTQTPTYVYKCEKGQLTQQNTSITLEENSYLEYMADEVIPYLKSRYFQTSRIDMDKSAHLIYSDGVTAGWSHEDLPFQYHYFRNLTQIYQDNELVYSDQTLLEPEKQDMFKLGYFEGWRNYNSLVMVSPNIDETFVKALQKHLEGLNLESDFAISSLDISGLVLRILGRTAEDNRRIIYSCADYFRQEIHGLTPLNLRKNDMRR.

Belongs to the UreD family. UreD, UreF and UreG form a complex that acts as a GTP-hydrolysis-dependent molecular chaperone, activating the urease apoprotein by helping to assemble the nickel containing metallocenter of UreC. The UreE protein probably delivers the nickel.

The protein resides in the cytoplasm. Its function is as follows. Required for maturation of urease via the functional incorporation of the urease nickel metallocenter. The chain is Urease accessory protein UreD from Streptococcus thermophilus (strain CNRZ 1066).